A 459-amino-acid polypeptide reads, in one-letter code: Cobyrinate a,c-diamide synthase (459 aa).

The GATase cobBQ-type domain occupies 249 to 446; it reads RIGMAFDEAF…VHTHFASRPG (198 aa). C332 (nucleophile) is an active-site residue.

The protein belongs to the CobB/CbiA family. It depends on Mg(2+) as a cofactor.

It carries out the reaction cob(II)yrinate + 2 L-glutamine + 2 ATP + 2 H2O = cob(II)yrinate a,c diamide + 2 L-glutamate + 2 ADP + 2 phosphate + 2 H(+). It functions in the pathway cofactor biosynthesis; adenosylcobalamin biosynthesis; cob(II)yrinate a,c-diamide from sirohydrochlorin (anaerobic route): step 10/10. Its function is as follows. Catalyzes the ATP-dependent amidation of the two carboxylate groups at positions a and c of cobyrinate, using either L-glutamine or ammonia as the nitrogen source. This Syntrophotalea carbinolica (strain DSM 2380 / NBRC 103641 / GraBd1) (Pelobacter carbinolicus) protein is Cobyrinate a,c-diamide synthase.